We begin with the raw amino-acid sequence, 433 residues long: Delta-aminolevulinic acid dehydratase, chloroplastic (433 aa).

The transit peptide at 1-56 directs the protein to the chloroplast; that stretch reads MASTFNIPCNAGTIKNFNNSQRNLGFSSNLGINFAKTRFSNCGDSGRIPSQLVVRA. Residues 83–115 are disordered; sequence NAPSAPPVPPTPKAPSGTPSVSPLSLGRRPRRN. The span at 86 to 95 shows a compositional bias: pro residues; sequence SAPPVPPTPK. K301 acts as the Schiff-base intermediate with substrate in catalysis. 5-aminolevulinate contacts are provided by R311 and K323. E339 contacts Mg(2+). K354 (schiff-base intermediate with substrate) is an active-site residue. Positions 380 and 419 each coordinate 5-aminolevulinate.

Belongs to the ALAD family. As to quaternary structure, homooctamer. It depends on Mg(2+) as a cofactor.

Its subcellular location is the plastid. The protein resides in the chloroplast. The catalysed reaction is 2 5-aminolevulinate = porphobilinogen + 2 H2O + H(+). It participates in porphyrin-containing compound metabolism; protoporphyrin-IX biosynthesis; coproporphyrinogen-III from 5-aminolevulinate: step 1/4. In terms of biological role, catalyzes an early step in the biosynthesis of tetrapyrroles. Binds two molecules of 5-aminolevulinate per subunit, each at a distinct site, and catalyzes their condensation to form porphobilinogen. The protein is Delta-aminolevulinic acid dehydratase, chloroplastic (HEMB) of Spinacia oleracea (Spinach).